The primary structure comprises 287 residues: AA14 family lytic polysaccharide monooxygenase A (287 aa).

An N-terminal signal peptide occupies residues 1 to 18 (MLRILTLSILATSKLASA). N-linked (GlcNAc...) asparagine glycosylation is found at N33, N83, and N137. 3 disulfides stabilise this stretch: C188–C193, C195–C216, and C236–C243. N-linked (GlcNAc...) asparagine glycosylation is present at N238.

Belongs to the polysaccharide monooxygenase AA14 family. Requires Cu(2+) as cofactor.

Its subcellular location is the secreted. Lytic polysaccharide monooxygenase (LPMO) that has a broad substrate specificity with strong oxidative activity on pure amorphous cellulose and xyloglucan and plays as a bifunctional enzyme to decompose some specific network structures formed between cellulose and hemicellulose in the plant cell walls. Catalysis by LPMOs requires the reduction of the active-site copper from Cu(II) to Cu(I) by a reducing agent and H(2)O(2) or O(2) as a cosubstrate. Simultaneously oxidizes cellulose, xylan and xyloglucan in natural hemi/cellulosic substrate such as fibrillated eucalyptus pulp, and releases native and oxidized cello-oligosaccharides, xylo-oligosaccharides and xyloglucan oligosaccharides from this substrate. The cellulolytic/hemicellulolytic activity becomes weaker as the contents of xylan increase in the alkaline-extracted hemi/cellulosic substrates. The protein is AA14 family lytic polysaccharide monooxygenase A of Talaromyces rugulosus (Penicillium rugulosum).